The primary structure comprises 449 residues: Trigger factor (449 aa).

In terms of domain architecture, PPIase FKBP-type spans 173 to 258 (GDRVTVDFVG…MKKVEWPHLP (86 aa)).

The protein belongs to the FKBP-type PPIase family. Tig subfamily.

It is found in the cytoplasm. The catalysed reaction is [protein]-peptidylproline (omega=180) = [protein]-peptidylproline (omega=0). Involved in protein export. Acts as a chaperone by maintaining the newly synthesized protein in an open conformation. Functions as a peptidyl-prolyl cis-trans isomerase. In Burkholderia thailandensis (strain ATCC 700388 / DSM 13276 / CCUG 48851 / CIP 106301 / E264), this protein is Trigger factor.